Here is a 383-residue protein sequence, read N- to C-terminus: Delta(12)-fatty-acid desaturase FAD2 (383 aa).

2 helical membrane passes run Val56 to Leu76 and Val84 to Ala104. Positions His105–His109 match the Histidine box-1 motif. A helical transmembrane segment spans residues Leu117–Trp137. Residues His141–His145 carry the Histidine box-2 motif. Transmembrane regions (helical) follow at residues Leu179–Ser199, Ile225–Ala245, and Ala249–Ile269. Residues His315–His319 carry the Histidine box-3 motif.

The protein belongs to the fatty acid desaturase type 1 family. Expressed in leaves and seeds.

It is found in the endoplasmic reticulum membrane. It catalyses the reaction (9Z)-octadecenoyl-CoA + 2 Fe(II)-[cytochrome b5] + O2 + 2 H(+) = (9Z,12Z)-octadecadienoyl-CoA + 2 Fe(III)-[cytochrome b5] + 2 H2O. The enzyme catalyses (9Z)-hexadecenoyl-CoA + 2 Fe(II)-[cytochrome b5] + O2 + 2 H(+) = (9Z,12Z)-hexadecadienoyl-CoA + 2 Fe(III)-[cytochrome b5] + 2 H2O. Its pathway is lipid metabolism; polyunsaturated fatty acid biosynthesis. Catalyzes the desaturation of oleic acid (18:1(9Z)) to linoleic acid (18:2(9Z,12Z)). This is Delta(12)-fatty-acid desaturase FAD2 from Vernicia fordii (Tung).